The chain runs to 326 residues: tRNA-modifying protein YgfZ (326 aa).

Residues tryptophan 27 and tryptophan 189 each contribute to the folate site.

Belongs to the tRNA-modifying YgfZ family.

The protein resides in the cytoplasm. Functionally, folate-binding protein involved in regulating the level of ATP-DnaA and in the modification of some tRNAs. It is probably a key factor in regulatory networks that act via tRNA modification, such as initiation of chromosomal replication. This is tRNA-modifying protein YgfZ from Escherichia fergusonii (strain ATCC 35469 / DSM 13698 / CCUG 18766 / IAM 14443 / JCM 21226 / LMG 7866 / NBRC 102419 / NCTC 12128 / CDC 0568-73).